Consider the following 130-residue polypeptide: Small ribosomal subunit protein uS9 (130 aa).

The protein belongs to the universal ribosomal protein uS9 family.

The polypeptide is Small ribosomal subunit protein uS9 (Sodalis glossinidius (strain morsitans)).